Reading from the N-terminus, the 79-residue chain is Putative defensin-like protein 274 (79 aa).

The first 23 residues, 1–23, serve as a signal peptide directing secretion; the sequence is MASSRFQLVALLVVFSLVISITA. Intrachain disulfides connect C35-C76, C41-C64, C47-C74, and C51-C75.

The protein belongs to the DEFL family.

Its subcellular location is the secreted. The protein is Putative defensin-like protein 274 of Arabidopsis thaliana (Mouse-ear cress).